A 386-amino-acid chain; its full sequence is Glutamate 5-kinase (386 aa).

Lysine 28 contacts ATP. Substrate-binding residues include serine 68, aspartate 155, and asparagine 167. An ATP-binding site is contributed by threonine 187–aspartate 188. In terms of domain architecture, PUA spans arginine 294–isoleucine 372.

Belongs to the glutamate 5-kinase family.

It is found in the cytoplasm. The catalysed reaction is L-glutamate + ATP = L-glutamyl 5-phosphate + ADP. It participates in amino-acid biosynthesis; L-proline biosynthesis; L-glutamate 5-semialdehyde from L-glutamate: step 1/2. Its function is as follows. Catalyzes the transfer of a phosphate group to glutamate to form L-glutamate 5-phosphate. The protein is Glutamate 5-kinase of Hahella chejuensis (strain KCTC 2396).